Reading from the N-terminus, the 316-residue chain is Bifunctional peptidase and (3S)-lysyl hydroxylase Jmjd7 (316 aa).

One can recognise a JmjC domain in the interval 128–307; it reads VQKQCSNLPT…LKYSYFQLMD (180 aa). 3 residues coordinate Fe cation: histidine 178, aspartate 180, and histidine 277.

Homodimer; disulfide-linked. Interacts with DRG1 and DRG2. The cofactor is Fe(2+).

It localises to the nucleus. The protein localises to the cytoplasm. The catalysed reaction is L-lysyl-[protein] + 2-oxoglutarate + O2 = (3S)-3-hydroxy-L-lysyl-[protein] + succinate + CO2. In terms of biological role, bifunctional enzyme that acts both as an endopeptidase and 2-oxoglutarate-dependent monooxygenase. Endopeptidase that cleaves histones N-terminal tails at the carboxyl side of methylated arginine or lysine residues, to generate 'tailless nucleosomes', which may trigger transcription elongation. Preferentially recognizes and cleaves monomethylated and dimethylated arginine residues of histones H2, H3 and H4. After initial cleavage, continues to digest histones tails via its aminopeptidase activity. Additionally, may play a role in protein biosynthesis by modifying the translation machinery. Acts as a Fe(2+) and 2-oxoglutarate-dependent monooxygenase, catalyzing (S)-stereospecific hydroxylation at C-3 of 'Lys-22' of DRG1 and 'Lys-21' of DRG2 translation factors (TRAFAC), promoting their interaction with ribonucleic acids (RNA). The protein is Bifunctional peptidase and (3S)-lysyl hydroxylase Jmjd7 of Mus musculus (Mouse).